The primary structure comprises 335 residues: Glucokinase (335 aa).

ATP is bound at residue 11 to 16 (ADIGGT).

It belongs to the bacterial glucokinase family.

The protein localises to the cytoplasm. It carries out the reaction D-glucose + ATP = D-glucose 6-phosphate + ADP + H(+). The polypeptide is Glucokinase (Stenotrophomonas maltophilia (strain K279a)).